We begin with the raw amino-acid sequence, 1137 residues long: Otoancorin (1137 aa).

Residues 1–23 form the signal peptide; the sequence is MSQGPRTCSLLLVLLLSHGGAYQ. N-linked (GlcNAc...) asparagine glycans are attached at residues Asn-156, Asn-211, Asn-244, Asn-289, Asn-321, Asn-380, Asn-384, Asn-530, Asn-594, Asn-740, and Asn-798. Positions 1095–1115 are enriched in polar residues; that stretch reads HSWQTDPLSSSPTWPASTGSP. Residues 1095-1119 are disordered; sequence HSWQTDPLSSSPTWPASTGSPTGEP. Gly-1113 carries the GPI-anchor amidated glycine lipid modification. Residues 1114 to 1137 constitute a propeptide, removed in mature form; sequence SPTGEPASQALWLGCTLLLLTAKS.

The protein belongs to the stereocilin family. Expressed in the inner ear and vestibule.

It localises to the apical cell membrane. Its subcellular location is the secreted. It is found in the extracellular space. The protein localises to the extracellular matrix. Functionally, may act as an adhesion molecule. This Mus musculus (Mouse) protein is Otoancorin (Otoa).